Here is a 287-residue protein sequence, read N- to C-terminus: MDKITRNIREGIHILLPFYENLPDISLSLGKSPLPSLEYGTNYFLQLSRVNDLNRLPTDMLSLFTHDIMLPETDMEKVYDILNIKSVKSYGKSIKADAVVADLSARNRLFKKDRELIKSNNYLTDNNLYISDYKMLTFEVFRPLFDLSSEKYCIVKLPTLFGKCVIDTIRVYCSLFKSVRLFKCASDSWLKDSAIMVASDIYKKNIDIFMSHIRSVLKSQYWKDSNNVQFSILKESVDKEFINKFLEFSTSVYESLYYVHSLLYSSMISDNKSIENEYQKKLTKLLL.

As to quaternary structure, heterodimer of a large and a small subunit.

Its subcellular location is the virion. It carries out the reaction a 5'-end (5'-triphosphoguanosine)-ribonucleoside in mRNA + S-adenosyl-L-methionine = a 5'-end (N(7)-methyl 5'-triphosphoguanosine)-ribonucleoside in mRNA + S-adenosyl-L-homocysteine. Functionally, catalyzes the last reaction in the mRNA cap formation pathway. This chain is mRNA-capping enzyme small subunit, found in Sus scrofa (Pig).